Consider the following 728-residue polypeptide: Catalase-peroxidase (728 aa).

An N-terminal signal peptide occupies residues 1 to 19; sequence MSTEAKCPVTGGATRSSSA. Positions 1–20 are disordered; sequence MSTEAKCPVTGGATRSSSAG. The tryptophyl-tyrosyl-methioninium (Trp-Tyr) (with M-245) cross-link spans 96–219; the sequence is WHAAGTYRIG…LAAVQMGLIY (124 aa). His97 serves as the catalytic Proton acceptor. Positions 219–245 form a cross-link, tryptophyl-tyrosyl-methioninium (Tyr-Met) (with W-96); sequence YVNPEGPNGKPDPVAAARDIRETFARM. A heme b-binding site is contributed by His260.

This sequence belongs to the peroxidase family. Peroxidase/catalase subfamily. As to quaternary structure, homodimer or homotetramer. Heme b serves as cofactor. Post-translationally, formation of the three residue Trp-Tyr-Met cross-link is important for the catalase, but not the peroxidase activity of the enzyme.

It carries out the reaction H2O2 + AH2 = A + 2 H2O. It catalyses the reaction 2 H2O2 = O2 + 2 H2O. Bifunctional enzyme with both catalase and broad-spectrum peroxidase activity. The polypeptide is Catalase-peroxidase (Acidiphilium cryptum (strain JF-5)).